A 338-amino-acid polypeptide reads, in one-letter code: Ketol-acid reductoisomerase (NADP(+)) (338 aa).

The 181-residue stretch at 1-181 folds into the KARI N-terminal Rossmann domain; that stretch reads MNVFYDKDAD…GGGRAGIIET (181 aa). NADP(+) contacts are provided by residues 24-27, arginine 47, and serine 52; that span reads YGSQ. The active site involves histidine 107. Residue glycine 133 coordinates NADP(+). The 146-residue stretch at 182–327 folds into the KARI C-terminal knotted domain; the sequence is NFREETETDL…AKLRAMMPWI (146 aa). Mg(2+) contacts are provided by aspartate 190, glutamate 194, glutamate 226, and glutamate 230. Serine 251 contributes to the substrate binding site.

The protein belongs to the ketol-acid reductoisomerase family. Requires Mg(2+) as cofactor.

The catalysed reaction is (2R)-2,3-dihydroxy-3-methylbutanoate + NADP(+) = (2S)-2-acetolactate + NADPH + H(+). It carries out the reaction (2R,3R)-2,3-dihydroxy-3-methylpentanoate + NADP(+) = (S)-2-ethyl-2-hydroxy-3-oxobutanoate + NADPH + H(+). It participates in amino-acid biosynthesis; L-isoleucine biosynthesis; L-isoleucine from 2-oxobutanoate: step 2/4. It functions in the pathway amino-acid biosynthesis; L-valine biosynthesis; L-valine from pyruvate: step 2/4. Functionally, involved in the biosynthesis of branched-chain amino acids (BCAA). Catalyzes an alkyl-migration followed by a ketol-acid reduction of (S)-2-acetolactate (S2AL) to yield (R)-2,3-dihydroxy-isovalerate. In the isomerase reaction, S2AL is rearranged via a Mg-dependent methyl migration to produce 3-hydroxy-3-methyl-2-ketobutyrate (HMKB). In the reductase reaction, this 2-ketoacid undergoes a metal-dependent reduction by NADPH to yield (R)-2,3-dihydroxy-isovalerate. The polypeptide is Ketol-acid reductoisomerase (NADP(+)) (Burkholderia lata (strain ATCC 17760 / DSM 23089 / LMG 22485 / NCIMB 9086 / R18194 / 383)).